Reading from the N-terminus, the 254-residue chain is Imidazole glycerol phosphate synthase subunit HisF (254 aa).

Catalysis depends on residues aspartate 12 and aspartate 131.

This sequence belongs to the HisA/HisF family. As to quaternary structure, heterodimer of HisH and HisF.

Its subcellular location is the cytoplasm. It catalyses the reaction 5-[(5-phospho-1-deoxy-D-ribulos-1-ylimino)methylamino]-1-(5-phospho-beta-D-ribosyl)imidazole-4-carboxamide + L-glutamine = D-erythro-1-(imidazol-4-yl)glycerol 3-phosphate + 5-amino-1-(5-phospho-beta-D-ribosyl)imidazole-4-carboxamide + L-glutamate + H(+). Its pathway is amino-acid biosynthesis; L-histidine biosynthesis; L-histidine from 5-phospho-alpha-D-ribose 1-diphosphate: step 5/9. Functionally, IGPS catalyzes the conversion of PRFAR and glutamine to IGP, AICAR and glutamate. The HisF subunit catalyzes the cyclization activity that produces IGP and AICAR from PRFAR using the ammonia provided by the HisH subunit. This chain is Imidazole glycerol phosphate synthase subunit HisF, found in Janthinobacterium sp. (strain Marseille) (Minibacterium massiliensis).